The sequence spans 307 residues: tRNA pseudouridine synthase B (307 aa).

Asp-48 acts as the Nucleophile in catalysis.

The protein belongs to the pseudouridine synthase TruB family. Type 1 subfamily.

The catalysed reaction is uridine(55) in tRNA = pseudouridine(55) in tRNA. Responsible for synthesis of pseudouridine from uracil-55 in the psi GC loop of transfer RNAs. This chain is tRNA pseudouridine synthase B, found in Neisseria meningitidis serogroup B (strain ATCC BAA-335 / MC58).